The primary structure comprises 379 residues: Cytochrome b (379 aa).

The next 4 membrane-spanning stretches (helical) occupy residues 32–52 (FGSLLGLCLATQILTGLFLAM), 76–97 (WLIRNMHANGASFFFICIYMHI), 112–132 (WNVGVILLLLVMMTAFVGYVL), and 177–197 (FFAFHFLFPFVIAAVTVIHLL). His82 and His96 together coordinate heme b. Heme b contacts are provided by His181 and His195. His200 serves as a coordination point for a ubiquinone. 4 consecutive transmembrane segments (helical) span residues 225-245 (YKDLLGFIIMMVALTSLALFS), 287-307 (LGGVLALLASILVLMLVPFLH), 319-339 (LTQILFWTFVANVIILTWIGG), and 346-366 (FIIIGQVASFLYFLLLLVLSP).

Belongs to the cytochrome b family. As to quaternary structure, the cytochrome bc1 complex contains 3 respiratory subunits (MT-CYB, CYC1 and UQCRFS1), 2 core proteins (UQCRC1 and UQCRC2) and probably 6 low-molecular weight proteins. Heme b serves as cofactor.

Its subcellular location is the mitochondrion inner membrane. Its function is as follows. Component of the ubiquinol-cytochrome c reductase complex (complex III or cytochrome b-c1 complex) that is part of the mitochondrial respiratory chain. The b-c1 complex mediates electron transfer from ubiquinol to cytochrome c. Contributes to the generation of a proton gradient across the mitochondrial membrane that is then used for ATP synthesis. In Chlorophthalmus agassizi (Shortnose greeneye), this protein is Cytochrome b (mt-cyb).